A 172-amino-acid polypeptide reads, in one-letter code: Putative B3 domain-containing protein At1g05615 (172 aa).

A DNA-binding region (TF-B3) is located at residues 69 to 169; that stretch reads VDEGKIIDFE…NLAMVPLTPT (101 aa).

It localises to the nucleus. This chain is Putative B3 domain-containing protein At1g05615, found in Arabidopsis thaliana (Mouse-ear cress).